Reading from the N-terminus, the 347-residue chain is Dihydroorotase (347 aa).

Residues H14 and H16 each coordinate Zn(2+). Residues 16–18 and N42 each bind substrate; that span reads HLR. K100, H137, and H175 together coordinate Zn(2+). Residue K100 is modified to N6-carboxylysine. Position 137 (H137) interacts with substrate. L220 is a substrate binding site. Position 248 (D248) interacts with Zn(2+). The active site involves D248. Residues H252 and A264 each contribute to the substrate site.

Belongs to the metallo-dependent hydrolases superfamily. DHOase family. Class II DHOase subfamily. As to quaternary structure, homodimer. The cofactor is Zn(2+).

It carries out the reaction (S)-dihydroorotate + H2O = N-carbamoyl-L-aspartate + H(+). It participates in pyrimidine metabolism; UMP biosynthesis via de novo pathway; (S)-dihydroorotate from bicarbonate: step 3/3. Functionally, catalyzes the reversible cyclization of carbamoyl aspartate to dihydroorotate. The polypeptide is Dihydroorotase (Pseudomonas syringae pv. tomato (strain ATCC BAA-871 / DC3000)).